A 416-amino-acid chain; its full sequence is Peptide chain release factor subunit 1 (416 aa).

The protein belongs to the eukaryotic release factor 1 family. As to quaternary structure, heterodimer of two subunits, one of which binds GTP.

The protein resides in the cytoplasm. Functionally, directs the termination of nascent peptide synthesis (translation) in response to the termination codons UAA, UAG and UGA. The sequence is that of Peptide chain release factor subunit 1 from Haloquadratum walsbyi (strain DSM 16790 / HBSQ001).